A 121-amino-acid polypeptide reads, in one-letter code: Large ribosomal subunit protein bL19 (121 aa).

The protein belongs to the bacterial ribosomal protein bL19 family.

This protein is located at the 30S-50S ribosomal subunit interface and may play a role in the structure and function of the aminoacyl-tRNA binding site. In Mesomycoplasma hyopneumoniae (strain 7448) (Mycoplasma hyopneumoniae), this protein is Large ribosomal subunit protein bL19.